The primary structure comprises 466 residues: Glutamate decarboxylase beta (466 aa).

Substrate-binding residues include Thr-62 and Asn-83. Residues 126-127 (SS), Thr-212, and His-275 contribute to the pyridoxal 5'-phosphate site. The residue at position 276 (Lys-276) is an N6-(pyridoxal phosphate)lysine. Lys-446, Lys-453, and Lys-464 each carry N6-acetyllysine.

This sequence belongs to the group II decarboxylase family. As to quaternary structure, homohexamer composed of three dimers. Pyridoxal 5'-phosphate is required as a cofactor.

The enzyme catalyses L-glutamate + H(+) = 4-aminobutanoate + CO2. In terms of biological role, converts glutamate to gamma-aminobutyrate (GABA), consuming one intracellular proton in the reaction. The gad system helps to maintain a near-neutral intracellular pH when cells are exposed to extremely acidic conditions. The ability to survive transit through the acidic conditions of the stomach is essential for successful colonization of the mammalian host by commensal and pathogenic bacteria. The protein is Glutamate decarboxylase beta (gadB) of Escherichia coli O6:H1 (strain CFT073 / ATCC 700928 / UPEC).